We begin with the raw amino-acid sequence, 298 residues long: Acetylglutamate kinase (298 aa).

Substrate is bound by residues 69–70, R91, and N196; that span reads GG.

The protein belongs to the acetylglutamate kinase family. ArgB subfamily.

Its subcellular location is the cytoplasm. It catalyses the reaction N-acetyl-L-glutamate + ATP = N-acetyl-L-glutamyl 5-phosphate + ADP. It functions in the pathway amino-acid biosynthesis; L-arginine biosynthesis; N(2)-acetyl-L-ornithine from L-glutamate: step 2/4. Its function is as follows. Catalyzes the ATP-dependent phosphorylation of N-acetyl-L-glutamate. In Rhodopseudomonas palustris (strain BisA53), this protein is Acetylglutamate kinase.